A 61-amino-acid chain; its full sequence is Probable pancreatic secretory proteinase inhibitor (61 aa).

Residues 6–61 enclose the Kazal-like domain; sequence LYRKPSCGEMSAMHACPMNFAPVCGTDGNTYPNECSLCFQRQNTKTDILITKDDRC. 3 disulfides stabilise this stretch: cysteine 12/cysteine 43, cysteine 21/cysteine 40, and cysteine 29/cysteine 61.

Its subcellular location is the secreted. The protein is Probable pancreatic secretory proteinase inhibitor of Anguilla anguilla (European freshwater eel).